A 198-amino-acid polypeptide reads, in one-letter code: Holliday junction resolvase RecU (198 aa).

4 residues coordinate Mg(2+): Thr83, Asp85, Glu98, and Gln117.

This sequence belongs to the RecU family. Mg(2+) is required as a cofactor.

It localises to the cytoplasm. It carries out the reaction Endonucleolytic cleavage at a junction such as a reciprocal single-stranded crossover between two homologous DNA duplexes (Holliday junction).. Its function is as follows. Endonuclease that resolves Holliday junction intermediates in genetic recombination. Cleaves mobile four-strand junctions by introducing symmetrical nicks in paired strands. Promotes annealing of linear ssDNA with homologous dsDNA. Required for DNA repair, homologous recombination and chromosome segregation. This chain is Holliday junction resolvase RecU, found in Streptococcus thermophilus (strain CNRZ 1066).